The chain runs to 261 residues: Pantothenate synthetase (261 aa).

29–36 (MGALHNGH) lines the ATP pocket. H36 (proton donor) is an active-site residue. Residue Q60 coordinates (R)-pantoate. Q60 provides a ligand contact to beta-alanine. 147–150 (GEKD) serves as a coordination point for ATP. Position 153 (Q153) interacts with (R)-pantoate. 184–187 (LSSR) lines the ATP pocket.

Belongs to the pantothenate synthetase family. Homodimer.

It is found in the cytoplasm. It catalyses the reaction (R)-pantoate + beta-alanine + ATP = (R)-pantothenate + AMP + diphosphate + H(+). It participates in cofactor biosynthesis; (R)-pantothenate biosynthesis; (R)-pantothenate from (R)-pantoate and beta-alanine: step 1/1. In terms of biological role, catalyzes the condensation of pantoate with beta-alanine in an ATP-dependent reaction via a pantoyl-adenylate intermediate. This Francisella tularensis subsp. tularensis (strain FSC 198) protein is Pantothenate synthetase.